Reading from the N-terminus, the 250-residue chain is MDEADPGEAEAAQAEAAQDGAAQDGAARDALLLLSWLSPGYPVGAYAYSHGLEWAAEAGDVRDEASLGAWLADVLSHGAARNDAILAAHAHGAGLAGDPRAAEALNDLALALAPSRELHLETSQQGRSFLDATVAAWPAPGLEALATRLPGPVAYPVAVGLAAGAHRIARRSLVTGYLSAFLQNQVSAALRLAPVGQSAGTRVVAALSPLVAALAAEAEGAPLDALGAATLRLDLGSFRHETQYSRIFRS.

The disordered stretch occupies residues Met-1–Ala-21. Low complexity predominate over residues Ala-9 to Ala-21.

It belongs to the UreF family. As to quaternary structure, ureD, UreF and UreG form a complex that acts as a GTP-hydrolysis-dependent molecular chaperone, activating the urease apoprotein by helping to assemble the nickel containing metallocenter of UreC. The UreE protein probably delivers the nickel.

It localises to the cytoplasm. Its function is as follows. Required for maturation of urease via the functional incorporation of the urease nickel metallocenter. The polypeptide is Urease accessory protein UreF (Methylobacterium sp. (strain 4-46)).